A 94-amino-acid chain; its full sequence is Co-chaperonin GroES (94 aa).

The protein belongs to the GroES chaperonin family. Heptamer of 7 subunits arranged in a ring. Interacts with the chaperonin GroEL.

The protein localises to the cytoplasm. Functionally, together with the chaperonin GroEL, plays an essential role in assisting protein folding. The GroEL-GroES system forms a nano-cage that allows encapsulation of the non-native substrate proteins and provides a physical environment optimized to promote and accelerate protein folding. GroES binds to the apical surface of the GroEL ring, thereby capping the opening of the GroEL channel. This is Co-chaperonin GroES from Lactococcus lactis subsp. lactis (strain IL1403) (Streptococcus lactis).